The chain runs to 375 residues: Ribosomal RNA large subunit methyltransferase G (375 aa).

This sequence belongs to the methyltransferase superfamily. RlmG family.

It localises to the cytoplasm. It carries out the reaction guanosine(1835) in 23S rRNA + S-adenosyl-L-methionine = N(2)-methylguanosine(1835) in 23S rRNA + S-adenosyl-L-homocysteine + H(+). In terms of biological role, specifically methylates the guanine in position 1835 (m2G1835) of 23S rRNA. The polypeptide is Ribosomal RNA large subunit methyltransferase G (Stutzerimonas stutzeri (strain A1501) (Pseudomonas stutzeri)).